We begin with the raw amino-acid sequence, 243 residues long: Carboxy-S-adenosyl-L-methionine synthase (243 aa).

S-adenosyl-L-methionine-binding positions include tyrosine 39, 64–66 (GCS), 90–91 (DN), 118–119 (DL), asparagine 133, and arginine 200.

It belongs to the class I-like SAM-binding methyltransferase superfamily. Cx-SAM synthase family. As to quaternary structure, homodimer.

The catalysed reaction is prephenate + S-adenosyl-L-methionine = carboxy-S-adenosyl-L-methionine + 3-phenylpyruvate + H2O. Its function is as follows. Catalyzes the conversion of S-adenosyl-L-methionine (SAM) to carboxy-S-adenosyl-L-methionine (Cx-SAM). This chain is Carboxy-S-adenosyl-L-methionine synthase, found in Idiomarina loihiensis (strain ATCC BAA-735 / DSM 15497 / L2-TR).